The sequence spans 409 residues: Small ribosomal subunit protein mS47 (409 aa).

The N-terminal 26 residues, 1–26, are a transit peptide targeting the mitochondrion; the sequence is MQTVKALRRVSEPLQWVRSVSYGRRF. Residues 388-409 are disordered; sequence ASELDDSDSELKLPTAQREPYF.

Belongs to the enoyl-CoA hydratase/isomerase family. Mitochondrion-specific ribosomal protein mS47 subfamily. Component of the mitochondrial ribosome small subunit.

Its subcellular location is the mitochondrion. The polypeptide is Small ribosomal subunit protein mS47 (Arabidopsis thaliana (Mouse-ear cress)).